The primary structure comprises 249 residues: 1-(5-phosphoribosyl)-5-[(5-phosphoribosylamino)methylideneamino] imidazole-4-carboxamide isomerase (249 aa).

Aspartate 8 acts as the Proton acceptor in catalysis. The active-site Proton donor is aspartate 131.

This sequence belongs to the HisA/HisF family.

It localises to the cytoplasm. It catalyses the reaction 1-(5-phospho-beta-D-ribosyl)-5-[(5-phospho-beta-D-ribosylamino)methylideneamino]imidazole-4-carboxamide = 5-[(5-phospho-1-deoxy-D-ribulos-1-ylimino)methylamino]-1-(5-phospho-beta-D-ribosyl)imidazole-4-carboxamide. Its pathway is amino-acid biosynthesis; L-histidine biosynthesis; L-histidine from 5-phospho-alpha-D-ribose 1-diphosphate: step 4/9. This is 1-(5-phosphoribosyl)-5-[(5-phosphoribosylamino)methylideneamino] imidazole-4-carboxamide isomerase from Aromatoleum aromaticum (strain DSM 19018 / LMG 30748 / EbN1) (Azoarcus sp. (strain EbN1)).